A 338-amino-acid chain; its full sequence is MRFTTIFWISLTVLATVRAEDGSHAQNEVQAGDGSHVQNEVQVGSEPQTQDSIETPKPTIKYIDFGDLTLSPSASSPAKRNVTLPPDTTMRPDPRQTEPPTEAPTPASTPAPTPDPGPWVDKWIGHDQVKPFPQPEPVTISEKAGVKFKPQIQIRTGCEPYPAVNEYGETGGGLKTTGKSRGNCGGSGYGSQVYGRSTWIRGVWAIMYSWYFPKDSPSPKMGHRHDWEHAIVFIDNPEVSEPKILACSVSSHDGYKKYNPCPSWVIDGTSLKVRYKHAWPLNHDLDATGDGGKFQDSIMWNQLTEDARRALNSVSFGKANTPFNDGKFMPKIENAWPF.

Positions 1 to 19 are cleaved as a signal peptide; the sequence is MRFTTIFWISLTVLATVRA. The segment at 68-119 is disordered; that stretch reads LTLSPSASSPAKRNVTLPPDTTMRPDPRQTEPPTEAPTPASTPAPTPDPGPW. N-linked (GlcNAc...) asparagine glycosylation occurs at N81. The segment covering 101-117 has biased composition (pro residues); that stretch reads TEAPTPASTPAPTPDPG. Positions 205 to 215 match the Conserved undecapeptide motif I motif; that stretch reads AIMYSWYFPKD. A Hepta-peptide GHRHDWE motif II motif is present at residues 222–227; it reads GHRHDW.

This sequence belongs to the Necrosis inducing protein (NPP1) family.

It localises to the secreted. Its function is as follows. Secreted effector that contributes strongly to virulence during infection by P.capsici. Causes large necrotic areas in both host C.annuum and non-host N.benthamiana. The protein is NLP effector protein 6 of Phytophthora capsici.